A 95-amino-acid polypeptide reads, in one-letter code: Co-chaperonin GroES (95 aa).

It belongs to the GroES chaperonin family. As to quaternary structure, heptamer of 7 subunits arranged in a ring. Interacts with the chaperonin GroEL.

Its subcellular location is the cytoplasm. Together with the chaperonin GroEL, plays an essential role in assisting protein folding. The GroEL-GroES system forms a nano-cage that allows encapsulation of the non-native substrate proteins and provides a physical environment optimized to promote and accelerate protein folding. GroES binds to the apical surface of the GroEL ring, thereby capping the opening of the GroEL channel. The sequence is that of Co-chaperonin GroES from Vesicomyosocius okutanii subsp. Calyptogena okutanii (strain HA).